Reading from the N-terminus, the 180-residue chain is Ribosome rescue factor SmrB (180 aa).

Residues 98–173 (LDLHGLTQLQ…GNAALLVLVA (76 aa)) form the Smr domain.

It belongs to the SmrB family. Associates with collided ribosomes, but not with correctly translating polysomes.

Functionally, acts as a ribosome collision sensor. Detects stalled/collided disomes (pairs of ribosomes where the leading ribosome is stalled and a second ribosome has collided with it) and endonucleolytically cleaves mRNA at the 5' boundary of the stalled ribosome. Stalled/collided disomes form a new interface (primarily via the 30S subunits) that binds SmrB. Cleaved mRNA becomes available for tmRNA ligation, leading to ribosomal subunit dissociation and rescue of stalled ribosomes. This Pectobacterium atrosepticum (strain SCRI 1043 / ATCC BAA-672) (Erwinia carotovora subsp. atroseptica) protein is Ribosome rescue factor SmrB.